A 504-amino-acid chain; its full sequence is Beta-xylosidase (504 aa).

E160 functions as the Proton donor in the catalytic mechanism. The active-site Nucleophile is E280.

The protein belongs to the glycosyl hydrolase 39 family.

The enzyme catalyses Hydrolysis of (1-&gt;4)-beta-D-xylans, to remove successive D-xylose residues from the non-reducing termini.. This Geobacillus stearothermophilus (Bacillus stearothermophilus) protein is Beta-xylosidase (xynB).